Here is a 203-residue protein sequence, read N- to C-terminus: Urease accessory protein UreG (203 aa).

14–21 is a binding site for GTP; the sequence is GPVGSGKT.

It belongs to the SIMIBI class G3E GTPase family. UreG subfamily. As to quaternary structure, homodimer. UreD, UreF and UreG form a complex that acts as a GTP-hydrolysis-dependent molecular chaperone, activating the urease apoprotein by helping to assemble the nickel containing metallocenter of UreC. The UreE protein probably delivers the nickel.

Its subcellular location is the cytoplasm. In terms of biological role, facilitates the functional incorporation of the urease nickel metallocenter. This process requires GTP hydrolysis, probably effectuated by UreG. This is Urease accessory protein UreG from Rhizobium etli (strain CIAT 652).